A 202-amino-acid chain; its full sequence is Eukaryotic translation initiation factor isoform 4E (202 aa).

The interval 1–24 (MATEAPPPVDTTEVPPFTAAETAV) is disordered. Residues 46–51 (QGAAWG), lysine 78, and 96–97 (WE) each bind mRNA. An intrachain disulfide couples cysteine 101 to cysteine 140. MRNA contacts are provided by residues 147–152 (RRSQDK) and 191–194 (KRER).

This sequence belongs to the eukaryotic initiation factor 4E family. In terms of assembly, EIF4F is a multi-subunit complex, the composition of which varies with external and internal environmental conditions. It is composed of at least EIF4A, EIF4E and EIF4G. EIF4E is also known to interact with other partners. In higher plants two isoforms of EIF4F have been identified, named isoform EIF4F and isoform EIF(iso)4F. Isoform EIF4F has subunits p220 and p26, whereas isoform EIF(iso)4F has subunits p82 and p28. As to quaternary structure, (Microbial infection) Interacts with viral genome-linked protein (VPg); this interaction is possible in susceptible hosts but impaired in resistant plants. According to the redox status, the Cys-101-Cys-140 disulfide bridge may have a role in regulating protein function by affecting its ability to bind capped mRNA.

The protein resides in the cytoplasm. It localises to the nucleus. Functionally, component of the protein complex eIF4F, which is involved in the recognition of the mRNA cap, ATP-dependent unwinding of 5'-terminal secondary structure and recruitment of mRNA to the ribosome. Recognizes and binds the 7-methylguanosine-containing mRNA cap during an early step in the initiation of protein synthesis and facilitates ribosome binding by inducing the unwinding of the mRNAs secondary structures. Key component of recessive resistance to potyviruses. Its function is as follows. (Microbial infection) Susceptibility host factor required for viral infection by recruiting viral RNAs to the host ribosomal complex via an interaction with viral genome-linked protein (VPg). The sequence is that of Eukaryotic translation initiation factor isoform 4E from Capsicum annuum (Capsicum pepper).